We begin with the raw amino-acid sequence, 85 residues long: Protein RnfH (85 aa).

Belongs to the UPF0125 (RnfH) family.

The protein is Protein RnfH of Cereibacter sphaeroides (strain ATCC 17023 / DSM 158 / JCM 6121 / CCUG 31486 / LMG 2827 / NBRC 12203 / NCIMB 8253 / ATH 2.4.1.) (Rhodobacter sphaeroides).